The primary structure comprises 826 residues: Zinc phosphodiesterase ELAC protein 2 (826 aa).

The transit peptide at 1 to 16 (MWALCSLLRSAAGRTM) directs the protein to the mitochondrion. Residues 15-24 (TMSQGRTISQ) are compositionally biased toward polar residues. Disordered stretches follow at residues 15–51 (TMSQ…PSGC) and 189–231 (QRRG…VSQR). Basic and acidic residues predominate over residues 27–38 (ARRERPRKDPLR). Residues S199, S208, S212, S229, S618, and S736 each carry the phosphoserine modification. Over residues 208–224 (SPERSSDSESNENEPHL) the composition is skewed to basic and acidic residues. The segment at 798-826 (ELAGGLEDGEPQQKRAHTEEPQAKKVRAQ) is disordered. Residues 808–820 (PQQKRAHTEEPQA) show a composition bias toward basic and acidic residues.

It belongs to the RNase Z family. In terms of assembly, homodimer. Interacts with PTCD1. It depends on Zn(2+) as a cofactor.

The protein localises to the mitochondrion. The protein resides in the mitochondrion matrix. It localises to the mitochondrion nucleoid. Its subcellular location is the nucleus. The catalysed reaction is Endonucleolytic cleavage of RNA, removing extra 3' nucleotides from tRNA precursor, generating 3' termini of tRNAs. A 3'-hydroxy group is left at the tRNA terminus and a 5'-phosphoryl group is left at the trailer molecule.. Functionally, zinc phosphodiesterase, which displays mitochondrial tRNA 3'-processing endonuclease activity. Involved in tRNA maturation, by removing a 3'-trailer from precursor tRNA. Associates with mitochondrial DNA complexes at the nucleoids to initiate RNA processing and ribosome assembly. This chain is Zinc phosphodiesterase ELAC protein 2 (ELAC2), found in Gorilla gorilla gorilla (Western lowland gorilla).